Consider the following 295-residue polypeptide: Phosphatidylserine decarboxylase proenzyme (295 aa).

Catalysis depends on charge relay system; for autoendoproteolytic cleavage activity residues D113, H169, and S256. Catalysis depends on S256, which acts as the Schiff-base intermediate with substrate; via pyruvic acid; for decarboxylase activity. S256 is modified (pyruvic acid (Ser); by autocatalysis).

This sequence belongs to the phosphatidylserine decarboxylase family. PSD-B subfamily. Prokaryotic type II sub-subfamily. In terms of assembly, heterodimer of a large membrane-associated beta subunit and a small pyruvoyl-containing alpha subunit. It depends on pyruvate as a cofactor. In terms of processing, is synthesized initially as an inactive proenzyme. Formation of the active enzyme involves a self-maturation process in which the active site pyruvoyl group is generated from an internal serine residue via an autocatalytic post-translational modification. Two non-identical subunits are generated from the proenzyme in this reaction, and the pyruvate is formed at the N-terminus of the alpha chain, which is derived from the carboxyl end of the proenzyme. The autoendoproteolytic cleavage occurs by a canonical serine protease mechanism, in which the side chain hydroxyl group of the serine supplies its oxygen atom to form the C-terminus of the beta chain, while the remainder of the serine residue undergoes an oxidative deamination to produce ammonia and the pyruvoyl prosthetic group on the alpha chain. During this reaction, the Ser that is part of the protease active site of the proenzyme becomes the pyruvoyl prosthetic group, which constitutes an essential element of the active site of the mature decarboxylase.

Its subcellular location is the cell membrane. The catalysed reaction is a 1,2-diacyl-sn-glycero-3-phospho-L-serine + H(+) = a 1,2-diacyl-sn-glycero-3-phosphoethanolamine + CO2. Its pathway is phospholipid metabolism; phosphatidylethanolamine biosynthesis; phosphatidylethanolamine from CDP-diacylglycerol: step 2/2. Catalyzes the formation of phosphatidylethanolamine (PtdEtn) from phosphatidylserine (PtdSer). In Clostridium botulinum (strain Langeland / NCTC 10281 / Type F), this protein is Phosphatidylserine decarboxylase proenzyme.